A 448-amino-acid polypeptide reads, in one-letter code: Guanine deaminase (448 aa).

His74 and His76 together coordinate Zn(2+). Substrate-binding positions include 76–79 (HAPQ), 204–205 (RF), 231–234 (HISE), and Asp319. 2 residues coordinate Zn(2+): His231 and Asp319.

It belongs to the metallo-dependent hydrolases superfamily. ATZ/TRZ family. Zn(2+) serves as cofactor.

It carries out the reaction guanine + H2O + H(+) = xanthine + NH4(+). The protein operates within purine metabolism; guanine degradation; xanthine from guanine: step 1/1. Its activity is regulated as follows. Strongly inhibited by p-chloromercuribenzoate (PCMB). Potassium cyanide (KCN) strongly inhibits activity towards 7,8-dihydropterin but has almost no effect on activity towards guanine. Pterin inhibits activity towards guanine but has little effect on activity towards 7,8-dihydropterin. Functionally, catalyzes the hydrolytic deamination of guanine, producing xanthine and ammonia. Also has 7,8-dihydropterin deaminase activity, which plays a role in synthesis of the red eye pigment aurodrosopterin. This Drosophila melanogaster (Fruit fly) protein is Guanine deaminase.